We begin with the raw amino-acid sequence, 152 residues long: Large ribosomal subunit protein bL9 (152 aa).

It belongs to the bacterial ribosomal protein bL9 family.

Binds to the 23S rRNA. This Nostoc punctiforme (strain ATCC 29133 / PCC 73102) protein is Large ribosomal subunit protein bL9.